The chain runs to 289 residues: Xylosylprotein 4-beta-galactosyltransferase (289 aa).

Residues 1–6 (MKLKTR) lie on the Cytoplasmic side of the membrane. The helical; Signal-anchor for type II membrane protein transmembrane segment at 7-27 (LILSGTILISLAACYFLVLLV) threads the bilayer. The Lumenal segment spans residues 28–289 (LDLEITRDLM…DLNWTPYCKS (262 aa)). 58–62 (PYRDR) contributes to the UDP-alpha-D-galactose binding site. 2 N-linked (GlcNAc...) asparagine glycosylation sites follow: Asn81 and Asn90. UDP-alpha-D-galactose is bound by residues 97–99 (FNR), 123–124 (VD), Tyr154, and Trp184. Mn(2+) is bound at residue Asp124. Residue 186–189 (LEDD) coordinates N-acetyl-D-glucosamine. A glycan (N-linked (GlcNAc...) asparagine) is linked at Asn201. Positions 214 to 236 (NTFRHIHGPKRKRDYTPKKNDKN) are disordered. Residues 217–226 (RHIHGPKRKR) are compositionally biased toward basic residues. Mn(2+) is bound at residue His218. 218-220 (HIH) contacts UDP-alpha-D-galactose. Residues 227-236 (DYTPKKNDKN) are compositionally biased toward basic and acidic residues.

This sequence belongs to the glycosyltransferase 7 family. Requires Mn(2+) as cofactor.

The protein localises to the membrane. The enzyme catalyses 3-O-(beta-D-xylosyl)-L-seryl-[protein] + UDP-alpha-D-galactose = 3-O-(beta-D-galactosyl-(1-&gt;4)-beta-D-xylosyl)-L-seryl-[protein] + UDP + H(+). Its pathway is protein modification; protein glycosylation. Glycosyltransferase required for the biosynthesis of the tetrasaccharide (GlcA-Gal-Gal-Xyl-)Ser core linker of heparan sulfate and chondroitin sulfate. Required for embryonic development. Involved in vulval epithelium invagination. Required for axon regeneration after injury. The chain is Xylosylprotein 4-beta-galactosyltransferase (sqv-3) from Caenorhabditis elegans.